Consider the following 346-residue polypeptide: Protein U59 (346 aa).

The protein belongs to the herpesviridae U59/UL88 family.

The polypeptide is Protein U59 (Elephantid herpesvirus 1 (isolate Asian elephant/Berlin/Kiba/1998) (EIHV-1)).